The following is a 68-amino-acid chain: ATP synthase F(0) complex subunit 8 (68 aa).

A helical membrane pass occupies residues valine 8–threonine 24. Residue lysine 54 is modified to N6-acetyllysine; alternate. The residue at position 54 (lysine 54) is an N6-succinyllysine; alternate. N6-acetyllysine is present on lysine 57.

Belongs to the ATPase protein 8 family. In terms of assembly, component of the ATP synthase complex composed at least of ATP5F1A/subunit alpha, ATP5F1B/subunit beta, ATP5MC1/subunit c (homooctomer), MT-ATP6/subunit a, MT-ATP8/subunit 8, ATP5ME/subunit e, ATP5MF/subunit f, ATP5MG/subunit g, ATP5MK/subunit k, ATP5MJ/subunit j, ATP5F1C/subunit gamma, ATP5F1D/subunit delta, ATP5F1E/subunit epsilon, ATP5PF/subunit F6, ATP5PB/subunit b, ATP5PD/subunit d, ATP5PO/subunit OSCP. ATP synthase complex consists of a soluble F(1) head domain (subunits alpha(3) and beta(3)) - the catalytic core - and a membrane F(0) domain - the membrane proton channel (subunits c, a, 8, e, f, g, k and j). These two domains are linked by a central stalk (subunits gamma, delta, and epsilon) rotating inside the F1 region and a stationary peripheral stalk (subunits F6, b, d, and OSCP). Interacts with PRICKLE3.

The protein resides in the mitochondrion membrane. Subunit 8, of the mitochondrial membrane ATP synthase complex (F(1)F(0) ATP synthase or Complex V) that produces ATP from ADP in the presence of a proton gradient across the membrane which is generated by electron transport complexes of the respiratory chain. ATP synthase complex consist of a soluble F(1) head domain - the catalytic core - and a membrane F(1) domain - the membrane proton channel. These two domains are linked by a central stalk rotating inside the F(1) region and a stationary peripheral stalk. During catalysis, ATP synthesis in the catalytic domain of F(1) is coupled via a rotary mechanism of the central stalk subunits to proton translocation. In vivo, can only synthesize ATP although its ATP hydrolase activity can be activated artificially in vitro. Part of the complex F(0) domain. This chain is ATP synthase F(0) complex subunit 8, found in Gorilla gorilla gorilla (Western lowland gorilla).